The primary structure comprises 129 residues: Follitropin subunit beta (129 aa).

The first 18 residues, 1-18, serve as a signal peptide directing secretion; that stretch reads MKSVQFCFLFCCWRAICC. 6 disulfide bridges follow: Cys21/Cys69, Cys35/Cys84, Cys38/Cys122, Cys46/Cys100, Cys50/Cys102, and Cys105/Cys112. 2 N-linked (GlcNAc...) asparagine glycosylation sites follow: Asn25 and Asn42.

It belongs to the glycoprotein hormones subunit beta family. In terms of assembly, heterodimer. The active follitropin is a heterodimer composed of an alpha chain/CGA shared with other hormones and a unique beta chain/FSHB shown here.

The protein localises to the secreted. Functionally, together with the alpha chain CGA constitutes follitropin, the follicle-stimulating hormone, and provides its biological specificity to the hormone heterodimer. Binds FSHR, a G protein-coupled receptor, on target cells to activate downstream signaling pathways. Follitropin is involved in follicle development and spermatogenesis in reproductive organs. This chain is Follitropin subunit beta (FSHB), found in Capra hircus (Goat).